The primary structure comprises 148 residues: 3-dehydroquinate dehydratase (148 aa).

Residue Tyr-23 is the Proton acceptor of the active site. Positions 75, 81, and 88 each coordinate substrate. His-101 functions as the Proton donor in the catalytic mechanism. Substrate is bound by residues 102–103 (MS) and Arg-112.

The protein belongs to the type-II 3-dehydroquinase family. In terms of assembly, homododecamer.

The catalysed reaction is 3-dehydroquinate = 3-dehydroshikimate + H2O. It participates in metabolic intermediate biosynthesis; chorismate biosynthesis; chorismate from D-erythrose 4-phosphate and phosphoenolpyruvate: step 3/7. In terms of biological role, catalyzes a trans-dehydration via an enolate intermediate. The chain is 3-dehydroquinate dehydratase from Syntrophotalea carbinolica (strain DSM 2380 / NBRC 103641 / GraBd1) (Pelobacter carbinolicus).